Consider the following 1051-residue polypeptide: Lateral signaling target protein 2 homolog (1051 aa).

Disordered regions lie at residues 305-440 (PLGS…DEDL), 516-552 (GSNA…PSTS), 566-703 (HLPS…NASS), and 837-968 (IDLA…DGKA). Residues 319-358 (NNTSSSTSNNNNNNNNNSSSSSSSSSGSGSNTAKTSTSST) are compositionally biased toward low complexity. The span at 360 to 370 (KAVERLVDHRN) shows a compositional bias: basic and acidic residues. A compositionally biased stretch (polar residues) spans 371 to 391 (NNSSTVAGATQPSTARSPSML). Low complexity-rich tracts occupy residues 392–401 (SLSAGSTPTA) and 409–428 (PSHS…NPPA). A compositionally biased stretch (polar residues) spans 518–528 (NAATERQQQQQ). Low complexity-rich tracts occupy residues 533–549 (LQPG…QDEP) and 568–582 (PSSS…SSNQ). A phosphoserine mark is found at S569 and S570. The span at 583-596 (QTTIKTPNGNQSMP) shows a compositional bias: polar residues. Residues 597–606 (NSSSSSSNHN) show a composition bias toward low complexity. 2 stretches are compositionally biased toward basic residues: residues 607–637 (NNRH…HPHH) and 650–672 (HHHH…ARKR). A compositionally biased stretch (polar residues) spans 692–703 (TPGSADTSNASS). Low complexity predominate over residues 840 to 852 (ASGNNNGNSNAAA). At S861 the chain carries Phosphoserine. 2 stretches are compositionally biased toward low complexity: residues 879 to 924 (QQQQ…SPIS) and 937 to 960 (SSIG…MSPP). The segment at 965 to 1025 (DGKAPRCMSC…VCRECYVREV (61 aa)) adopts an FYVE-type zinc-finger fold. 8 residues coordinate Zn(2+): C971, C974, C987, C990, C995, C998, C1017, and C1020. A disordered region spans residues 1028–1051 (SRQAPAQPSQAHGQASRPQAASAS).

This sequence belongs to the lst-2 family.

In terms of biological role, negative regulator of epidermal growth factor receptor (EGFR) signaling. This is Lateral signaling target protein 2 homolog from Drosophila mojavensis (Fruit fly).